We begin with the raw amino-acid sequence, 450 residues long: UPF0210 protein CPF_1748 (450 aa).

It belongs to the UPF0210 family. In terms of assembly, homodimer.

This is UPF0210 protein CPF_1748 from Clostridium perfringens (strain ATCC 13124 / DSM 756 / JCM 1290 / NCIMB 6125 / NCTC 8237 / Type A).